The sequence spans 265 residues: Mlc titration factor A (265 aa).

The Zn(2+) site is built by His-111, His-148, His-152, and Glu-211.

It belongs to the MtfA family. In terms of assembly, interacts with Mlc. Zn(2+) is required as a cofactor.

It localises to the cytoplasm. Involved in the modulation of the activity of the glucose-phosphotransferase system (glucose-PTS). Interacts with the transcriptional repressor Mlc, preventing its interaction with DNA and leading to the modulation of expression of genes regulated by Mlc, including ptsG, which encodes the PTS system glucose-specific EIICB component. Its function is as follows. Shows zinc-dependent metallopeptidase activity. This chain is Mlc titration factor A, found in Shigella dysenteriae serotype 1 (strain Sd197).